A 269-amino-acid polypeptide reads, in one-letter code: Staphylococcal secretory antigen ssaA2 (269 aa).

Positions M1–A27 are cleaved as a signal peptide. 7 repeat units span residues Y83 to N85, Y88 to N90, Y91 to N93, Y97 to N99, Y103 to N105, Y106 to N108, and Y115 to N117. Residues Y83–Y115 form a 7 X 3 AA repeats of Y-[NS]-N region. Residues M148–H269 enclose the Peptidase C51 domain.

It localises to the secreted. Functionally, not known; immunogenic protein. The sequence is that of Staphylococcal secretory antigen ssaA2 (ssaA2) from Staphylococcus aureus (strain MSSA476).